The primary structure comprises 211 residues: Mitotic spindle assembly checkpoint protein MAD2B (211 aa).

Residues 13 to 203 (QVVADILCEF…SDILKMQLYV (191 aa)) enclose the HORMA domain.

Homooligomer. Interacts with rev1. Interacts with rev3l. Interacts with fzr1 (in complex with the anaphase promoting complex APC). May interact with cdc20.

Its subcellular location is the nucleus. The protein localises to the cytoplasm. It localises to the cytoskeleton. It is found in the spindle. Its function is as follows. Adapter protein able to interact with different proteins and involved in different biological processes. Mediates the interaction between the error-prone DNA polymerase zeta catalytic subunit rev3l and the inserter polymerase rev1, thereby mediating the second polymerase switching in translesion DNA synthesis. Translesion DNA synthesis releases the replication blockade of replicative polymerases, stalled in presence of DNA lesions. May also play a role in signal transduction in response to DNA damage. May regulate the activation of the anaphase promoting complex APC thereby regulating progression through the cell cycle. Through transcriptional regulation may play a role in epithelial-mesenchymal transdifferentiation. The sequence is that of Mitotic spindle assembly checkpoint protein MAD2B (mad2l2) from Xenopus tropicalis (Western clawed frog).